The following is a 439-amino-acid chain: Ribosomal protein uS12 methylthiotransferase RimO (439 aa).

One can recognise an MTTase N-terminal domain in the interval 5-117; sequence KKLHLISLGC…IDELIASKQS (113 aa). [4Fe-4S] cluster is bound by residues Cys14, Cys48, Cys80, Cys149, Cys153, and Cys156. The 229-residue stretch at 135-363 folds into the Radical SAM core domain; sequence TGSNYHAYIK…GEIAERSTLR (229 aa). Residues 366 to 437 enclose the TRAM domain; sequence EKMVGKTVEL…GMQLLATLIK (72 aa).

This sequence belongs to the methylthiotransferase family. RimO subfamily. Requires [4Fe-4S] cluster as cofactor.

It localises to the cytoplasm. It carries out the reaction L-aspartate(89)-[ribosomal protein uS12]-hydrogen + (sulfur carrier)-SH + AH2 + 2 S-adenosyl-L-methionine = 3-methylsulfanyl-L-aspartate(89)-[ribosomal protein uS12]-hydrogen + (sulfur carrier)-H + 5'-deoxyadenosine + L-methionine + A + S-adenosyl-L-homocysteine + 2 H(+). Its function is as follows. Catalyzes the methylthiolation of an aspartic acid residue of ribosomal protein uS12. The polypeptide is Ribosomal protein uS12 methylthiotransferase RimO (Sulfurovum sp. (strain NBC37-1)).